We begin with the raw amino-acid sequence, 393 residues long: Elongation factor Tu (393 aa).

A tr-type G domain is found at 10–202 (KPHVNIGTIG…AVDEYIPTPE (193 aa)). The segment at 19–26 (GHVDHGKT) is G1. Residue 19–26 (GHVDHGKT) coordinates GTP. T26 provides a ligand contact to Mg(2+). The interval 60–64 (GITIN) is G2. A G3 region spans residues 81–84 (DCPG). Residues 81–85 (DCPGH) and 136–139 (NKAD) contribute to the GTP site. Positions 136–139 (NKAD) are G4. Residues 174 to 176 (SAL) are G5.

It belongs to the TRAFAC class translation factor GTPase superfamily. Classic translation factor GTPase family. EF-Tu/EF-1A subfamily. As to quaternary structure, monomer.

Its subcellular location is the cytoplasm. The enzyme catalyses GTP + H2O = GDP + phosphate + H(+). Functionally, GTP hydrolase that promotes the GTP-dependent binding of aminoacyl-tRNA to the A-site of ribosomes during protein biosynthesis. The polypeptide is Elongation factor Tu (Clostridium novyi (strain NT)).